Here is a 356-residue protein sequence, read N- to C-terminus: Sterol-4-alpha-carboxylate 3-dehydrogenase, decarboxylating (356 aa).

The residue at position 1 (methionine 1) is an N-acetylmethionine. Tyrosine 155 functions as the Proton acceptor in the catalytic mechanism. Lysine 159 contacts NAD(+). A helical membrane pass occupies residues 281–301; sequence WLAYYLALLVSLLVMVISPVI. Residues 353 to 356 carry the Prevents secretion from ER motif; that stretch reads RKVM.

This sequence belongs to the 3-beta-HSD family. Homodimer.

The protein resides in the endoplasmic reticulum membrane. The protein localises to the lipid droplet. It carries out the reaction a 3beta-hydroxysteroid-4alpha-carboxylate + NADP(+) = a 3-oxosteroid + CO2 + NADPH. The enzyme catalyses a 3beta-hydroxysteroid-4alpha-carboxylate + NAD(+) = a 3-oxosteroid + CO2 + NADH. The catalysed reaction is 4alpha-carboxyzymosterol + NADP(+) = zymosterone + CO2 + NADPH. It catalyses the reaction 4alpha-carboxy-4beta-methyl-5alpha-cholest-8-en-3beta-ol + NADP(+) = 4alpha-methyl-5alpha-cholest-8-en-3-one + CO2 + NADPH. It carries out the reaction 4alpha-carboxy-5alpha-cholest-8-ene-3beta-ol + NADP(+) = 5alpha-cholest-8-en-3-one + CO2 + NADPH. The enzyme catalyses 4beta-methylzymosterol-4alpha-carboxylate + NADP(+) = 3-dehydro-4-methylzymosterol + CO2 + NADPH. The catalysed reaction is 4beta-methylzymosterol-4alpha-carboxylate + NAD(+) = 3-dehydro-4-methylzymosterol + CO2 + NADH. It catalyses the reaction 4alpha-carboxy-5alpha-cholest-8-ene-3beta-ol + NAD(+) = 5alpha-cholest-8-en-3-one + CO2 + NADH. It carries out the reaction 4alpha-carboxy-4beta-methyl-5alpha-cholest-8-en-3beta-ol + NAD(+) = 4alpha-methyl-5alpha-cholest-8-en-3-one + CO2 + NADH. The enzyme catalyses 4alpha-carboxyzymosterol + NAD(+) = zymosterone + CO2 + NADH. The protein operates within steroid biosynthesis; zymosterol biosynthesis; zymosterol from lanosterol: step 4/6. Its function is as follows. Catalyzes the NAD(P)(+)-dependent oxidative decarboxylation of the C4 methyl groups of 4-alpha-carboxysterols in post-squalene cholesterol biosynthesis. Also plays a role in the regulation of the endocytic trafficking of EGFR. In Bos taurus (Bovine), this protein is Sterol-4-alpha-carboxylate 3-dehydrogenase, decarboxylating (NSDHL).